Reading from the N-terminus, the 727-residue chain is Adhesion G protein-coupled receptor L4 (727 aa).

The N-terminal stretch at 1-19 is a signal peptide; that stretch reads MKLLLFAAWFSSLLDPCRF. The Extracellular portion of the chain corresponds to 20–467; sequence LDICQSCHPN…LAHYNVLTRI (448 aa). The EGF-like 1; calcium-binding domain maps to 52–90; the sequence is DDNECETVPEICGLHANCTNYVGGYYCNCLSGFISNGTE. 6 disulfide bridges follow: C56–C69, C63–C78, C106–C118, C112–C127, C408–C438, and C426–C440. Positions 102 to 139 constitute an EGF-like 2; calcium-binding domain; the sequence is DINECEEDRKCGPNSKCHNNIGSFICSCLRGYTSPAGP. The region spanning 282 to 456 is the GAIN-B domain; it reads TQMQVHAGDV…AILMSSARAN (175 aa). The GPS stretch occupies residues 408–456; the sequence is CAFWEYSPSMMGHWSLDGCIRTRVNTTHTSCSCNHLTHFAILMSSARAN. The helical transmembrane segment at 468-488 threads the bilayer; that stretch reads TQLGMVISLICLSMCIFTFWF. Topologically, residues 489–496 are cytoplasmic; the sequence is FRDIQNTR. The helical transmembrane segment at 497–517 threads the bilayer; the sequence is TTIHKNLCCSLFMAQFIFLIG. Residues 518-535 lie on the Extracellular side of the membrane; that stretch reads INKSAHKWFCSLIAGLLH. The helical transmembrane segment at 536 to 556 threads the bilayer; sequence YFFLAAFAWMCIEGIHLYLIV. Topologically, residues 557-568 are cytoplasmic; the sequence is VGVIYNKGFLHR. A helical transmembrane segment spans residues 569–589; it reads NFYAFGYGSPAVVVAISATLG. Topologically, residues 590–609 are extracellular; sequence YKYYGTSSVCWLSTENNFIW. Residues 610-630 form a helical membrane-spanning segment; sequence SFIGPAILIILVNLLAFAVII. At 631 to 654 the chain is on the cytoplasmic side; that stretch reads YKVYRHTAVKKPEISHYENIRSCA. The helical transmembrane segment at 655–675 threads the bilayer; the sequence is RGAIALLFVLGVTWAFGVMYI. The Extracellular segment spans residues 676–682; sequence LYETTLT. The chain crosses the membrane as a helical span at residues 683–703; the sequence is AYLFTFANVFQGMFIFIFLCV.

The protein belongs to the G-protein coupled receptor 2 family. Adhesion G-protein coupled receptor (ADGR) subfamily. In terms of assembly, heterodimer of 2 chains generated by proteolytic processing; the large extracellular N-terminal fragment and the membrane-bound C-terminal fragment predominantly remain associated and non-covalently linked. In terms of processing, autoproteolytically processed at the GPS region of the GAIN-B domain; this cleavage modulates receptor activity.

The protein resides in the cell membrane. Functionally, orphan receptor that plays a role in vessel formation. This Danio rerio (Zebrafish) protein is Adhesion G protein-coupled receptor L4.